Here is a 100-residue protein sequence, read N- to C-terminus: Putative ESAT-6-like protein Y (100 aa).

It belongs to the WXG100 family.

The sequence is that of Putative ESAT-6-like protein Y from Mycobacterium leprae (strain TN).